Consider the following 650-residue polypeptide: Cell division control protein 45 (650 aa).

Composition is skewed to acidic residues over residues 168 to 205 (ESGD…EDET) and 449 to 461 (NNDD…EEDN). Disordered regions lie at residues 168-227 (ESGD…KQRK) and 442-462 (SVKI…EDNS). The residue at position 453 (Thr-453) is a Phosphothreonine.

This sequence belongs to the CDC45 family. As to quaternary structure, assembles into a complex with MCM5/CDC46. Interacts with MCM10.

The protein localises to the nucleus. Functionally, required for initiation of chromosomal DNA replication. Acts at the origin of replication. Also has a role in minichromosome maintenance. The chain is Cell division control protein 45 (CDC45) from Saccharomyces cerevisiae (strain ATCC 204508 / S288c) (Baker's yeast).